The primary structure comprises 295 residues: sn-glycerol-3-phosphate transport system permease protein UgpA (295 aa).

The Cytoplasmic portion of the chain corresponds to 1–11; it reads MSSSRPVFRSR. The helical transmembrane segment at 12–32 threads the bilayer; it reads WLPYLLVAPQLIITVIFFIWP. Topologically, residues 33 to 80 are periplasmic; it reads AGEALWYSLQSVDPFGFSSQFVGLDNFVTLFHDSYYLDAFWTTIKFST. In terms of domain architecture, ABC transmembrane type-1 spans 76–284; that stretch reads IKFSTFVTVS…FLVIVLTVVQ (209 aa). The helical transmembrane segment at 81–101 threads the bilayer; sequence FVTVSGLLVSLFFAALVEYIV. Residues 102–109 lie on the Cytoplasmic side of the membrane; that stretch reads RGSRFYQT. The helical transmembrane segment at 110–130 threads the bilayer; sequence LMLLPYAVAPAVAAVLWIFLF. At 131–156 the chain is on the periplasmic side; that stretch reads NPGRGLITHFLAEFGYDWNHAQNSGQ. The chain crosses the membrane as a helical span at residues 157 to 177; that stretch reads AMFLVVFASVWKQISYNFLFF. The Cytoplasmic portion of the chain corresponds to 178-207; it reads YAALQSIPRSLIEAAAIDGAGPIRRFFKIA. Residues 208-228 form a helical membrane-spanning segment; that stretch reads LPLIAPVSFFLLVVNLVYAFF. Residues 229 to 262 lie on the Periplasmic side of the membrane; sequence DTFPVIDAATSGGPVQATTTLIYKIYREGFTGLD. A helical membrane pass occupies residues 263-283; it reads LASSAAQSVVLMFLVIVLTVV. At 284 to 295 the chain is on the cytoplasmic side; that stretch reads QFRYVEGKVRYQ.

It belongs to the binding-protein-dependent transport system permease family. UgpAE subfamily. As to quaternary structure, the complex is composed of two ATP-binding proteins (UgpC), two transmembrane proteins (UgpA and UgpE) and a solute-binding protein (UgpB).

The protein resides in the cell inner membrane. In terms of biological role, part of the ABC transporter complex UgpBAEC involved in sn-glycerol-3-phosphate (G3P) import. Probably responsible for the translocation of the substrate across the membrane. This is sn-glycerol-3-phosphate transport system permease protein UgpA (ugpA) from Escherichia coli O6:K15:H31 (strain 536 / UPEC).